Consider the following 714-residue polypeptide: Polyribonucleotide nucleotidyltransferase (714 aa).

D487 and D493 together coordinate Mg(2+). Positions 554-613 constitute a KH domain; it reads PRIETLKIPTDKIREVIGTGGKVIREIVEKTGAKINIEDDGTVKVASSDGNSIKAAIAWI. In terms of domain architecture, S1 motif spans 623 to 691; the sequence is GQIYEGTVVK…DRGKVRLSMR (69 aa).

It belongs to the polyribonucleotide nucleotidyltransferase family. It depends on Mg(2+) as a cofactor.

Its subcellular location is the cytoplasm. The catalysed reaction is RNA(n+1) + phosphate = RNA(n) + a ribonucleoside 5'-diphosphate. Its function is as follows. Involved in mRNA degradation. Catalyzes the phosphorolysis of single-stranded polyribonucleotides processively in the 3'- to 5'-direction. The sequence is that of Polyribonucleotide nucleotidyltransferase from Methylocella silvestris (strain DSM 15510 / CIP 108128 / LMG 27833 / NCIMB 13906 / BL2).